We begin with the raw amino-acid sequence, 352 residues long: Putative KilA-N domain-containing protein 006L (352 aa).

Residues T15–Y123 form the KilA-N domain. Residues K129–E236 adopt a coiled-coil conformation.

The protein belongs to the IIV-6 006L/238R/313L/468L family.

The polypeptide is Putative KilA-N domain-containing protein 006L (Acheta domesticus (House cricket)).